The sequence spans 199 residues: Holliday junction branch migration complex subunit RuvA (199 aa).

Residues 1 to 64 (MIALLTGKLA…EDAINLYGFR (64 aa)) form a domain I region. The domain II stretch occupies residues 65-143 (TMEEKEMFQL…KLGHGPLQQD (79 aa)). A flexible linker region spans residues 144–148 (VAPAD). The interval 149 to 199 (AHNDMRDDVVSALVNLGYKEAVVQKTVDEIGVAADATVESLLKQALKKLMK) is domain III.

Belongs to the RuvA family. As to quaternary structure, homotetramer. Forms an RuvA(8)-RuvB(12)-Holliday junction (HJ) complex. HJ DNA is sandwiched between 2 RuvA tetramers; dsDNA enters through RuvA and exits via RuvB. An RuvB hexamer assembles on each DNA strand where it exits the tetramer. Each RuvB hexamer is contacted by two RuvA subunits (via domain III) on 2 adjacent RuvB subunits; this complex drives branch migration. In the full resolvosome a probable DNA-RuvA(4)-RuvB(12)-RuvC(2) complex forms which resolves the HJ.

It localises to the cytoplasm. Functionally, the RuvA-RuvB-RuvC complex processes Holliday junction (HJ) DNA during genetic recombination and DNA repair, while the RuvA-RuvB complex plays an important role in the rescue of blocked DNA replication forks via replication fork reversal (RFR). RuvA specifically binds to HJ cruciform DNA, conferring on it an open structure. The RuvB hexamer acts as an ATP-dependent pump, pulling dsDNA into and through the RuvAB complex. HJ branch migration allows RuvC to scan DNA until it finds its consensus sequence, where it cleaves and resolves the cruciform DNA. The protein is Holliday junction branch migration complex subunit RuvA of Geotalea daltonii (strain DSM 22248 / JCM 15807 / FRC-32) (Geobacter daltonii).